Consider the following 582-residue polypeptide: Acylamino-acid-releasing enzyme (582 aa).

Catalysis depends on charge relay system residues Ser445, Asp524, and His556.

Belongs to the peptidase S9C family.

It localises to the cytoplasm. It catalyses the reaction Cleavage of an N-acetyl or N-formyl amino acid from the N-terminus of a polypeptide.. In terms of biological role, this enzyme catalyzes the hydrolysis of the N-terminal peptide bond of an N-acetylated peptide to generate an N-acetylated amino acid and a peptide with a free N-terminus. The sequence is that of Acylamino-acid-releasing enzyme from Aeropyrum pernix (strain ATCC 700893 / DSM 11879 / JCM 9820 / NBRC 100138 / K1).